A 67-amino-acid chain; its full sequence is Large ribosomal subunit protein bL31 (67 aa).

The protein belongs to the bacterial ribosomal protein bL31 family. Type A subfamily. In terms of assembly, part of the 50S ribosomal subunit.

Its function is as follows. Binds the 23S rRNA. The sequence is that of Large ribosomal subunit protein bL31 from Helicobacter acinonychis (strain Sheeba).